Consider the following 693-residue polypeptide: Ion-translocating oxidoreductase complex subunit C (693 aa).

4Fe-4S ferredoxin-type domains are found at residues 368-397 (MEPV…QQLY) and 407-436 (KARD…VQYY). [4Fe-4S] cluster-binding residues include C377, C380, C383, C387, C416, C419, C422, and C426. Basic and acidic residues predominate over residues 539-548 (REERVREKQS). The interval 539–564 (REERVREKQSQQETPATEVTPEELDP) is disordered.

Belongs to the 4Fe4S bacterial-type ferredoxin family. RnfC subfamily. In terms of assembly, the complex is composed of six subunits: RnfA, RnfB, RnfC, RnfD, RnfE and RnfG. [4Fe-4S] cluster is required as a cofactor.

The protein resides in the cell inner membrane. In terms of biological role, part of a membrane-bound complex that couples electron transfer with translocation of ions across the membrane. The protein is Ion-translocating oxidoreductase complex subunit C of Pectobacterium atrosepticum (strain SCRI 1043 / ATCC BAA-672) (Erwinia carotovora subsp. atroseptica).